A 397-amino-acid chain; its full sequence is MSLESELQKELSSRKAINRYRSRRVALSPSGVRMRVEGETKELIAFCSNDYLGLAQHPKVIEAFTQAARHYGVGSGASHLVNGHSQEHHQLEEELAAFTGRPRALLFSTGYMANMGVINGLLGRGDAVFQDKLNHASLLDGGLISGAKFHRFRHNDCEHLNTQLEKSTAARKLIVVDGVFSMDGDAANLNQLAASAKKHNAWLMVDDAHGFGCMGENGKGVVDACGLTLDDVPILMGTLGKAFGTFGAFVAGSETLIEALIQLARTYVYTTALPPAVAAATRASLHLLETEHWRREKLNALIQQFRGGCEALNLQLMPSQSPIQPIVLGEDAVALNVSKKMAERGFWITAIRPPTVPEGTARLRITLSAEHSEQDVEQLLNALAEVMREVSGELQSE.

Arg21 contacts substrate. 110 to 111 (GY) contributes to the pyridoxal 5'-phosphate binding site. A substrate-binding site is contributed by His135. Pyridoxal 5'-phosphate contacts are provided by Ser181, His209, and Thr238. Lys241 carries the N6-(pyridoxal phosphate)lysine modification. Residue Thr355 coordinates substrate.

This sequence belongs to the class-II pyridoxal-phosphate-dependent aminotransferase family. BioF subfamily. Homodimer. It depends on pyridoxal 5'-phosphate as a cofactor.

It catalyses the reaction 6-carboxyhexanoyl-[ACP] + L-alanine + H(+) = (8S)-8-amino-7-oxononanoate + holo-[ACP] + CO2. Its pathway is cofactor biosynthesis; biotin biosynthesis. In terms of biological role, catalyzes the decarboxylative condensation of pimeloyl-[acyl-carrier protein] and L-alanine to produce 8-amino-7-oxononanoate (AON), [acyl-carrier protein], and carbon dioxide. The chain is 8-amino-7-oxononanoate synthase from Saccharophagus degradans (strain 2-40 / ATCC 43961 / DSM 17024).